The following is a 374-amino-acid chain: Tryptophan--tRNA ligase (374 aa).

The 'HIGH' region signature appears at 71–79 (PSGRMHLGH). The 'KMSKS' region motif lies at 247–251 (KMSSS).

Belongs to the class-I aminoacyl-tRNA synthetase family.

It localises to the cytoplasm. The catalysed reaction is tRNA(Trp) + L-tryptophan + ATP = L-tryptophyl-tRNA(Trp) + AMP + diphosphate + H(+). The sequence is that of Tryptophan--tRNA ligase from Methanopyrus kandleri (strain AV19 / DSM 6324 / JCM 9639 / NBRC 100938).